The primary structure comprises 468 residues: Microtubule-associated tyrosine carboxypeptidase 1 (468 aa).

A compositionally biased stretch (polar residues) spans 1–10 (MVLDSGTQVY). 2 disordered regions span residues 1-39 (MVLD…PPLY) and 77-112 (MKRS…TLRP). His-277 contributes to the Zn(2+) binding site. Catalysis depends on Glu-278, which acts as the Nucleophile. Residues His-282 and Glu-313 each contribute to the Zn(2+) site.

The protein belongs to the peptidase MATCAP family. It depends on Zn(2+) as a cofactor.

Its subcellular location is the cytoplasm. It localises to the cytoskeleton. The enzyme catalyses C-terminal L-alpha-aminoacyl-L-glutamyl-L-glutamyl-L-tyrosyl-[tubulin] + H2O = C-terminal L-alpha-aminoacyl-L-glutamyl-L-glutamyl-[tubulin] + L-tyrosine. It carries out the reaction C-terminal L-alpha-aminoacyl-L-glutamyl-L-glutamyl-L-phenylalanyl-[tubulin] + H2O = C-terminal L-alpha-aminoacyl-L-glutamyl-L-glutamyl-[tubulin] + L-phenylalanine. Functionally, tyrosine carboxypeptidase that removes the C-terminal tyrosine residue of alpha-tubulin, thereby regulating microtubule dynamics and function. Also able to remove the C-terminal phenylalanine residue of alpha-tubulin TUBA8. Recognizes adjacent tubulin dimers along the same protofilament. The chain is Microtubule-associated tyrosine carboxypeptidase 1 from Rattus norvegicus (Rat).